Reading from the N-terminus, the 349-residue chain is Isopentenyl-diphosphate delta-isomerase (349 aa).

6-7 (RK) is a substrate binding site. FMN is bound by residues 62–64 (AMT), Ser-93, and Asn-122. Substrate is bound at residue Gln-152. A Mg(2+)-binding site is contributed by Glu-153. FMN is bound by residues Lys-184, Thr-214, 258–259 (GG), and 280–281 (AG).

This sequence belongs to the IPP isomerase type 2 family. As to quaternary structure, homooctamer. Dimer of tetramers. FMN serves as cofactor. NADPH is required as a cofactor. The cofactor is Mg(2+).

It localises to the cytoplasm. It carries out the reaction isopentenyl diphosphate = dimethylallyl diphosphate. Its function is as follows. Involved in the biosynthesis of isoprenoids. Catalyzes the 1,3-allylic rearrangement of the homoallylic substrate isopentenyl (IPP) to its allylic isomer, dimethylallyl diphosphate (DMAPP). The polypeptide is Isopentenyl-diphosphate delta-isomerase (Bacillus thuringiensis subsp. konkukian (strain 97-27)).